The chain runs to 316 residues: Protein FLUORESCENT IN BLUE LIGHT, chloroplastic (316 aa).

The transit peptide at 1–26 directs the protein to the chloroplast; that stretch reads MAALIRCCSSFSHTSGGQPPPRDKSR. The helical transmembrane segment at 125–145 threads the bilayer; it reads MFSMPILLLVALIGATVGGLL. The stretch at 144–175 forms a coiled coil; the sequence is LLARQRKGELQRLNEQLRQINAALRRQAKIES. TPR repeat units lie at residues 203 to 236, 243 to 276, and 283 to 316; these read LISKLKTGKTFLRNQEPEKAYTEFKIALELAQSL, KKAARGLGASLQRQGKYREAIQYHSMVLAISKRE, and TEAYGAIADCYTELGDLEKAGKFYDTYIARLETD.

Part of the FLU-containing chloroplast membrane complex composed of FLU, CRD1, PORB, PORC, CHLP and HEMA1. Interacts with HEMA1 (via C-terminus) only in the absence of light. No interaction with HEMA2.

It is found in the plastid. Its subcellular location is the chloroplast membrane. The protein localises to the chloroplast thylakoid membrane. Negative regulator of tetrapyrrole biosynthesis (including chlorophyll) in chloroplasts, probably via HEMA1 repression. Inhibits especially the magnesium ion Mg(2+) branch of tetrapyrrole biosynthesis, but independently of heme. The chain is Protein FLUORESCENT IN BLUE LIGHT, chloroplastic (FLU) from Arabidopsis thaliana (Mouse-ear cress).